A 229-amino-acid polypeptide reads, in one-letter code: Lipoprotein-releasing system ATP-binding protein LolD (229 aa).

Residues 6-229 (LELDAIERTY…DGHLTPYVPA (224 aa)) enclose the ABC transporter domain. Position 42–49 (42–49 (GPSGSGKS)) interacts with ATP.

Belongs to the ABC transporter superfamily. Lipoprotein translocase (TC 3.A.1.125) family. The complex is composed of two ATP-binding proteins (LolD) and two transmembrane proteins (LolC and LolE).

The protein resides in the cell inner membrane. Part of the ABC transporter complex LolCDE involved in the translocation of mature outer membrane-directed lipoproteins, from the inner membrane to the periplasmic chaperone, LolA. Responsible for the formation of the LolA-lipoprotein complex in an ATP-dependent manner. This chain is Lipoprotein-releasing system ATP-binding protein LolD, found in Maricaulis maris (strain MCS10) (Caulobacter maris).